The chain runs to 193 residues: NADH-quinone oxidoreductase subunit B (193 aa).

Polar residues predominate over residues 1–11 (MGLTGTNTTLV). The interval 1-23 (MGLTGTNTTLVAPQPKGILDPRT) is disordered. [4Fe-4S] cluster-binding residues include cysteine 72, cysteine 73, cysteine 137, and cysteine 167.

This sequence belongs to the complex I 20 kDa subunit family. NDH-1 is composed of 14 different subunits. Subunits NuoB, C, D, E, F, and G constitute the peripheral sector of the complex. [4Fe-4S] cluster serves as cofactor.

The protein localises to the cell inner membrane. It carries out the reaction a quinone + NADH + 5 H(+)(in) = a quinol + NAD(+) + 4 H(+)(out). Functionally, NDH-1 shuttles electrons from NADH, via FMN and iron-sulfur (Fe-S) centers, to quinones in the respiratory chain. Couples the redox reaction to proton translocation (for every two electrons transferred, four hydrogen ions are translocated across the cytoplasmic membrane), and thus conserves the redox energy in a proton gradient. The polypeptide is NADH-quinone oxidoreductase subunit B (Brucella canis (strain ATCC 23365 / NCTC 10854 / RM-666)).